The primary structure comprises 187 residues: MSFETTAITFFIILLICLICILLLLVVFLYKCFQGRKGKETKKVPCTDANGGVDCAAAKVVTSNPEDHERILMQVMNLNVPMRPGILVQRQSKEVLATPLENRRDMEAEEENQINEKQEPENAGETGQEEDDGLQKIHTSVTRTPSVVESQKRPLKGVTFSREVIVVDLGNEYPTPRSYTREHKERK.

A helical membrane pass occupies residues 8–28 (ITFFIILLICLICILLLLVVF). Positions 99–153 (PLENRRDMEAEEENQINEKQEPENAGETGQEEDDGLQKIHTSVTRTPSVVESQKR) are disordered. Positions 137–149 (IHTSVTRTPSVVE) are enriched in polar residues.

The protein resides in the membrane. This is an uncharacterized protein from Homo sapiens (Human).